The chain runs to 95 residues: Protein J1 homolog (95 aa).

Belongs to the chordopoxvirinae J1 family. Homodimer. Part of a complex composed of A30, G7, F10 kinase, A15, D2, D3, and J1. Interacts with A45.

It localises to the virion. The protein localises to the host cytoplasm. Its function is as follows. Late protein which is a part of a large complex required for early virion morphogenesis. This complex participates in the formation of virosomes and the incorporation of virosomal contents into nascent immature virions. J1 protein is required for DNA packaging during immature virions (IV) formation. This Sus scrofa (Pig) protein is Protein J1 homolog.